We begin with the raw amino-acid sequence, 446 residues long: tRNA modification GTPase MnmE (446 aa).

The (6S)-5-formyl-5,6,7,8-tetrahydrofolate site is built by arginine 22, glutamate 80, and lysine 119. The TrmE-type G domain occupies glycine 215–glycine 370. A K(+)-binding site is contributed by asparagine 225. GTP is bound by residues asparagine 225–threonine 230, threonine 244–threonine 250, and aspartate 269–glycine 272. Serine 229 contributes to the Mg(2+) binding site. Positions 244, 246, and 249 each coordinate K(+). Threonine 250 contributes to the Mg(2+) binding site. Lysine 446 is a binding site for (6S)-5-formyl-5,6,7,8-tetrahydrofolate.

This sequence belongs to the TRAFAC class TrmE-Era-EngA-EngB-Septin-like GTPase superfamily. TrmE GTPase family. In terms of assembly, homodimer. Heterotetramer of two MnmE and two MnmG subunits. It depends on K(+) as a cofactor.

The protein resides in the cytoplasm. Functionally, exhibits a very high intrinsic GTPase hydrolysis rate. Involved in the addition of a carboxymethylaminomethyl (cmnm) group at the wobble position (U34) of certain tRNAs, forming tRNA-cmnm(5)s(2)U34. The sequence is that of tRNA modification GTPase MnmE from Legionella pneumophila subsp. pneumophila (strain Philadelphia 1 / ATCC 33152 / DSM 7513).